Consider the following 328-residue polypeptide: Malate dehydrogenase 2 (328 aa).

12–18 (GAAGQIA) serves as a coordination point for NAD(+). Substrate contacts are provided by Arg93 and Arg99. NAD(+) contacts are provided by residues Asn106, Gln113, and 130–132 (VGN). 2 residues coordinate substrate: Asn132 and Arg163. His188 serves as the catalytic Proton acceptor.

Belongs to the LDH/MDH superfamily. MDH type 2 family.

It carries out the reaction (S)-malate + NAD(+) = oxaloacetate + NADH + H(+). In terms of biological role, catalyzes the reversible oxidation of malate to oxaloacetate. The polypeptide is Malate dehydrogenase 2 (Burkholderia vietnamiensis (strain G4 / LMG 22486) (Burkholderia cepacia (strain R1808))).